The chain runs to 109 residues: Parvalbumin beta-1 (109 aa).

Serine 2 carries the post-translational modification N-acetylserine. 2 consecutive EF-hand domains span residues 39–74 (KSHEEVKKAFFVIDQDQSGFIEEDELKLFLQTFGAG) and 78–109 (LTAAETKAFLAAGDEDGDGMIGVDEFVTLVKA). Ca(2+)-binding residues include aspartate 52, aspartate 54, serine 56, phenylalanine 58, glutamate 60, glutamate 63, aspartate 91, aspartate 93, aspartate 95, methionine 97, and glutamate 102.

It belongs to the parvalbumin family.

In terms of biological role, in muscle, parvalbumin is thought to be involved in relaxation after contraction. It binds two calcium ions. This is Parvalbumin beta-1 from Gadus chalcogrammus (Alaska pollock).